The sequence spans 321 residues: Holliday junction branch migration complex subunit RuvB (321 aa).

Residues 1–173 (MMMEQECVDD…FGIISRLEFY (173 aa)) are large ATPase domain (RuvB-L). ATP-binding positions include Ile12, Arg13, Gly54, Lys57, Thr58, Thr59, 120-122 (EDF), Arg163, Tyr173, and Arg210. Thr58 lines the Mg(2+) pocket. The small ATPAse domain (RuvB-S) stretch occupies residues 174 to 244 (TPAELACIVK…LASDALARMD (71 aa)). Residues 247-321 (ELGLDQMDRK…KAYRHMNLLA (75 aa)) are head domain (RuvB-H). DNA contacts are provided by Arg302 and Arg307.

It belongs to the RuvB family. Homohexamer. Forms an RuvA(8)-RuvB(12)-Holliday junction (HJ) complex. HJ DNA is sandwiched between 2 RuvA tetramers; dsDNA enters through RuvA and exits via RuvB. An RuvB hexamer assembles on each DNA strand where it exits the tetramer. Each RuvB hexamer is contacted by two RuvA subunits (via domain III) on 2 adjacent RuvB subunits; this complex drives branch migration. In the full resolvosome a probable DNA-RuvA(4)-RuvB(12)-RuvC(2) complex forms which resolves the HJ.

It is found in the cytoplasm. It catalyses the reaction ATP + H2O = ADP + phosphate + H(+). Its function is as follows. The RuvA-RuvB-RuvC complex processes Holliday junction (HJ) DNA during genetic recombination and DNA repair, while the RuvA-RuvB complex plays an important role in the rescue of blocked DNA replication forks via replication fork reversal (RFR). RuvA specifically binds to HJ cruciform DNA, conferring on it an open structure. The RuvB hexamer acts as an ATP-dependent pump, pulling dsDNA into and through the RuvAB complex. RuvB forms 2 homohexamers on either side of HJ DNA bound by 1 or 2 RuvA tetramers; 4 subunits per hexamer contact DNA at a time. Coordinated motions by a converter formed by DNA-disengaged RuvB subunits stimulates ATP hydrolysis and nucleotide exchange. Immobilization of the converter enables RuvB to convert the ATP-contained energy into a lever motion, pulling 2 nucleotides of DNA out of the RuvA tetramer per ATP hydrolyzed, thus driving DNA branch migration. The RuvB motors rotate together with the DNA substrate, which together with the progressing nucleotide cycle form the mechanistic basis for DNA recombination by continuous HJ branch migration. Branch migration allows RuvC to scan DNA until it finds its consensus sequence, where it cleaves and resolves cruciform DNA. The sequence is that of Holliday junction branch migration complex subunit RuvB from Oleidesulfovibrio alaskensis (strain ATCC BAA-1058 / DSM 17464 / G20) (Desulfovibrio alaskensis).